The sequence spans 208 residues: Thiamine-phosphate synthase (208 aa).

Residues 36–40 and aspartate 68 contribute to the 4-amino-2-methyl-5-(diphosphooxymethyl)pyrimidine site; that span reads QLRMK. Residues aspartate 69 and aspartate 88 each coordinate Mg(2+). Threonine 107 contacts 4-amino-2-methyl-5-(diphosphooxymethyl)pyrimidine. 133 to 135 is a binding site for 2-[(2R,5Z)-2-carboxy-4-methylthiazol-5(2H)-ylidene]ethyl phosphate; the sequence is TTT. Lysine 136 contacts 4-amino-2-methyl-5-(diphosphooxymethyl)pyrimidine. Glycine 169 contacts 2-[(2R,5Z)-2-carboxy-4-methylthiazol-5(2H)-ylidene]ethyl phosphate.

The protein belongs to the thiamine-phosphate synthase family. Mg(2+) serves as cofactor.

The enzyme catalyses 2-[(2R,5Z)-2-carboxy-4-methylthiazol-5(2H)-ylidene]ethyl phosphate + 4-amino-2-methyl-5-(diphosphooxymethyl)pyrimidine + 2 H(+) = thiamine phosphate + CO2 + diphosphate. It catalyses the reaction 2-(2-carboxy-4-methylthiazol-5-yl)ethyl phosphate + 4-amino-2-methyl-5-(diphosphooxymethyl)pyrimidine + 2 H(+) = thiamine phosphate + CO2 + diphosphate. The catalysed reaction is 4-methyl-5-(2-phosphooxyethyl)-thiazole + 4-amino-2-methyl-5-(diphosphooxymethyl)pyrimidine + H(+) = thiamine phosphate + diphosphate. Its pathway is cofactor biosynthesis; thiamine diphosphate biosynthesis; thiamine phosphate from 4-amino-2-methyl-5-diphosphomethylpyrimidine and 4-methyl-5-(2-phosphoethyl)-thiazole: step 1/1. Its function is as follows. Condenses 4-methyl-5-(beta-hydroxyethyl)thiazole monophosphate (THZ-P) and 2-methyl-4-amino-5-hydroxymethyl pyrimidine pyrophosphate (HMP-PP) to form thiamine monophosphate (TMP). The protein is Thiamine-phosphate synthase of Phocaeicola vulgatus (strain ATCC 8482 / DSM 1447 / JCM 5826 / CCUG 4940 / NBRC 14291 / NCTC 11154) (Bacteroides vulgatus).